A 233-amino-acid chain; its full sequence is 5'-methylthioadenosine/S-adenosylhomocysteine nucleosidase (233 aa).

Glu12 acts as the Proton acceptor in catalysis. Substrate is bound by residues Gly78, Ile156, and 177–178 (ME). Asp201 (proton donor) is an active-site residue.

The protein belongs to the PNP/UDP phosphorylase family. MtnN subfamily.

It catalyses the reaction S-adenosyl-L-homocysteine + H2O = S-(5-deoxy-D-ribos-5-yl)-L-homocysteine + adenine. It carries out the reaction S-methyl-5'-thioadenosine + H2O = 5-(methylsulfanyl)-D-ribose + adenine. The catalysed reaction is 5'-deoxyadenosine + H2O = 5-deoxy-D-ribose + adenine. The protein operates within amino-acid biosynthesis; L-methionine biosynthesis via salvage pathway; S-methyl-5-thio-alpha-D-ribose 1-phosphate from S-methyl-5'-thioadenosine (hydrolase route): step 1/2. Functionally, catalyzes the irreversible cleavage of the glycosidic bond in both 5'-methylthioadenosine (MTA) and S-adenosylhomocysteine (SAH/AdoHcy) to adenine and the corresponding thioribose, 5'-methylthioribose and S-ribosylhomocysteine, respectively. Also cleaves 5'-deoxyadenosine, a toxic by-product of radical S-adenosylmethionine (SAM) enzymes, into 5-deoxyribose and adenine. The chain is 5'-methylthioadenosine/S-adenosylhomocysteine nucleosidase from Listeria monocytogenes serotype 4a (strain HCC23).